The sequence spans 879 residues: Beta-mannosidase (879 aa).

The signal sequence occupies residues 1–19 (MHLHLLLILALFRAGCVVA). 4 N-linked (GlcNAc...) asparagine glycosylation sites follow: N35, N77, N89, and N113. A disulfide bridge connects residues C167 and C176. Position 190–192 (190–192 (WDW)) interacts with substrate. N-linked (GlcNAc...) asparagine glycosylation is found at N226, N297, and N302. N456 is a binding site for substrate. The active-site Proton donor is the E457. Cystine bridges form between C540–C629, C732–C761, and C764–C769. Residue E554 is the Nucleophile of the active site. N-linked (GlcNAc...) asparagine glycosylation is present at N736. N-linked (GlcNAc...) asparagine glycans are attached at residues N803 and N807.

Belongs to the glycosyl hydrolase 2 family. In terms of assembly, monomer. As to expression, highest level in liver, high levels in lung, testis, skin and spleen, moderate level in thymus. Activity found in plasma, kidney, liver, spleen, pancreas, brain, testis, epididymis, heart, lung and skeletal muscle.

It localises to the lysosome. The catalysed reaction is Hydrolysis of terminal, non-reducing beta-D-mannose residues in beta-D-mannosides.. It functions in the pathway glycan metabolism; N-glycan degradation. Functionally, exoglycosidase that cleaves the single beta-linked mannose residue from the non-reducing end of all N-linked glycoprotein oligosaccharides. The protein is Beta-mannosidase of Mus musculus (Mouse).